The primary structure comprises 255 residues: Ribosomal RNA small subunit methyltransferase G (255 aa).

Residues 1 to 44 are disordered; sequence MSSPGRPKGEYRSAQHAGAVAGPPGRPDGEHRGSSGADPNGRLR. S-adenosyl-L-methionine contacts are provided by residues Gly118, Leu123, 169 to 170, and Arg183; that span reads VE.

This sequence belongs to the methyltransferase superfamily. RNA methyltransferase RsmG family.

The protein localises to the cytoplasm. The catalysed reaction is guanosine(527) in 16S rRNA + S-adenosyl-L-methionine = N(7)-methylguanosine(527) in 16S rRNA + S-adenosyl-L-homocysteine. Functionally, specifically methylates the N7 position of guanine in position 527 of 16S rRNA. This chain is Ribosomal RNA small subunit methyltransferase G, found in Bordetella petrii (strain ATCC BAA-461 / DSM 12804 / CCUG 43448).